A 235-amino-acid polypeptide reads, in one-letter code: Phosphoribosylaminoimidazole-succinocarboxamide synthase (235 aa).

Belongs to the SAICAR synthetase family.

The enzyme catalyses 5-amino-1-(5-phospho-D-ribosyl)imidazole-4-carboxylate + L-aspartate + ATP = (2S)-2-[5-amino-1-(5-phospho-beta-D-ribosyl)imidazole-4-carboxamido]succinate + ADP + phosphate + 2 H(+). It functions in the pathway purine metabolism; IMP biosynthesis via de novo pathway; 5-amino-1-(5-phospho-D-ribosyl)imidazole-4-carboxamide from 5-amino-1-(5-phospho-D-ribosyl)imidazole-4-carboxylate: step 1/2. The polypeptide is Phosphoribosylaminoimidazole-succinocarboxamide synthase (Clostridium perfringens (strain SM101 / Type A)).